Consider the following 260-residue polypeptide: 5'-nucleotidase SurE (260 aa).

4 residues coordinate a divalent metal cation: D8, D9, S43, and N96.

This sequence belongs to the SurE nucleotidase family. A divalent metal cation serves as cofactor.

The protein resides in the cytoplasm. The catalysed reaction is a ribonucleoside 5'-phosphate + H2O = a ribonucleoside + phosphate. In terms of biological role, nucleotidase that shows phosphatase activity on nucleoside 5'-monophosphates. The protein is 5'-nucleotidase SurE of Ruegeria pomeroyi (strain ATCC 700808 / DSM 15171 / DSS-3) (Silicibacter pomeroyi).